We begin with the raw amino-acid sequence, 485 residues long: NADH-quinone oxidoreductase subunit N (485 aa).

14 helical membrane-spanning segments follow: residues L8–I28, F35–V55, G71–A91, F105–L125, A127–F147, Y159–A179, L203–F223, P235–M255, V271–Q291, L297–Q317, V326–L346, A373–I393, W408–V430, and I455–I475.

It belongs to the complex I subunit 2 family. As to quaternary structure, NDH-1 is composed of 13 different subunits. Subunits NuoA, H, J, K, L, M, N constitute the membrane sector of the complex.

The protein localises to the cell inner membrane. The enzyme catalyses a quinone + NADH + 5 H(+)(in) = a quinol + NAD(+) + 4 H(+)(out). Functionally, NDH-1 shuttles electrons from NADH, via FMN and iron-sulfur (Fe-S) centers, to quinones in the respiratory chain. The immediate electron acceptor for the enzyme in this species is believed to be ubiquinone. Couples the redox reaction to proton translocation (for every two electrons transferred, four hydrogen ions are translocated across the cytoplasmic membrane), and thus conserves the redox energy in a proton gradient. In Salmonella gallinarum (strain 287/91 / NCTC 13346), this protein is NADH-quinone oxidoreductase subunit N.